The primary structure comprises 190 residues: Segregation and condensation protein B (190 aa).

Belongs to the ScpB family. Homodimer. Homodimerization may be required to stabilize the binding of ScpA to the Smc head domains. Component of a cohesin-like complex composed of ScpA, ScpB and the Smc homodimer, in which ScpA and ScpB bind to the head domain of Smc. The presence of the three proteins is required for the association of the complex with DNA.

The protein localises to the cytoplasm. Functionally, participates in chromosomal partition during cell division. May act via the formation of a condensin-like complex containing Smc and ScpA that pull DNA away from mid-cell into both cell halves. The protein is Segregation and condensation protein B of Ruminiclostridium cellulolyticum (strain ATCC 35319 / DSM 5812 / JCM 6584 / H10) (Clostridium cellulolyticum).